Reading from the N-terminus, the 200-residue chain is Putative manganese exporter (200 aa).

The next 6 helical transmembrane spans lie at 13-33 (TEHV…AEIG), 53-73 (IIAA…WLGV), 81-101 (PDIL…WILI), 110-130 (SIST…AEIG), 150-170 (WVIV…VLIG), and 180-200 (GLIR…TAFF).

Belongs to the GDT1 family.

It is found in the cell inner membrane. Its function is as follows. Involved in manganese homeostasis. May function as a manganese exporter. The sequence is that of Putative manganese exporter from Vibrio cholerae serotype O1 (strain ATCC 39541 / Classical Ogawa 395 / O395).